The sequence spans 334 residues: Thioredoxin reductase aclT (334 aa).

FAD contacts are provided by residues 16 to 19 (GGPA), 38 to 43 (NASIDR), Ile93, Ala122, Asp294, and 302 to 303 (TL).

The protein belongs to the class-II pyridine nucleotide-disulfide oxidoreductase family. Homodimer. The cofactor is FAD.

It functions in the pathway mycotoxin biosynthesis. Functionally, thioredoxin reductase; part of the gene cluster that mediates the biosynthesis of aspirochlorine (or antibiotic A30641), an unusual halogenated spiro compound with distinctive antifungal properties due to selective inhibition of protein biosynthesis, and which is also active against bacteria, viruses, and murine tumor cells. The non-ribosomal peptide synthetase (NRPS) aclP is responsible the formation of the diketopiperazine (DKP) core from the condensation of 2 phenylalanine residues. One Phe residue is tailored into chlorotyrosine by hydroxylation and chlorination, whereas the second Phe undergoes an unprecedented C-C bond cleavage to be converted into glycine. After formation of the DKP, sulfur is incorporated into the DKP by conjugation with glutathione by aclG, followed by its stepwise degradation to the thiol by aclI, aclJ and aclK, and the dithiol oxidation by aclT. In addition, oxygenases (aclB, aclC, aclL and aclO) and O-methyltransferases (aclM and aclU) act as tailoring enzymes to produce the intermediate dechloroaspirochlorine. Ultimately, chlorination of dechloroaspirochlorine by the halogenase aclH is the last step in the aspirochlorine pathway. The polypeptide is Thioredoxin reductase aclT (Aspergillus oryzae (strain ATCC 42149 / RIB 40) (Yellow koji mold)).